Reading from the N-terminus, the 212-residue chain is Octanoyltransferase (212 aa).

Residues 33–212 (GTAPELVWLL…ATFPEVFGAD (180 aa)) form the BPL/LPL catalytic domain. Substrate-binding positions include 72-79 (RGGQYTYH), 144-146 (AIG), and 157-159 (GIA). Cys175 serves as the catalytic Acyl-thioester intermediate.

The protein belongs to the LipB family.

The protein resides in the cytoplasm. It carries out the reaction octanoyl-[ACP] + L-lysyl-[protein] = N(6)-octanoyl-L-lysyl-[protein] + holo-[ACP] + H(+). It participates in protein modification; protein lipoylation via endogenous pathway; protein N(6)-(lipoyl)lysine from octanoyl-[acyl-carrier-protein]: step 1/2. Its function is as follows. Catalyzes the transfer of endogenously produced octanoic acid from octanoyl-acyl-carrier-protein onto the lipoyl domains of lipoate-dependent enzymes. Lipoyl-ACP can also act as a substrate although octanoyl-ACP is likely to be the physiological substrate. This is Octanoyltransferase from Paramagnetospirillum magneticum (strain ATCC 700264 / AMB-1) (Magnetospirillum magneticum).